A 568-amino-acid polypeptide reads, in one-letter code: Keratin, type I cytoskeletal 10 (568 aa).

The span at 1–15 shows a compositional bias: low complexity; that stretch reads MSVRYSSSKQYSSSR. The segment at 1-31 is disordered; the sequence is MSVRYSSSKQYSSSRSGGGGGGGGGSSFRIS. Residues 1–135 are head; sequence MSVRYSSSKQ…GGDGGLLSGN (135 aa). Phosphoserine is present on residues Ser-14, Ser-16, Ser-36, Ser-47, Ser-50, and Ser-160. The segment covering 16-26 has biased composition (gly residues); it reads SGGGGGGGGGS. The segment at 136 to 171 is coil 1A; that stretch reads EKVTMQNLNDRLASYLDKVRALEESNYELEGKIKEW. One can recognise an IF rod domain in the interval 136–450; it reads EKVTMQNLND…SLLEGEGSSG (315 aa). The tract at residues 172–192 is linker 1; that stretch reads YEKHGNSSQRAPRDYSKYYQT. The interval 193–284 is coil 1B; it reads IEDLKNQILN…KNHEEEMRDL (92 aa). Positions 285-307 are linker 12; sequence QNVSTGDVNVEMNAAPGVDLTEL. The interval 308–446 is coil 2; it reads LNNMRNQYEQ…QTYRSLLEGE (139 aa). Residues 447 to 568 form a tail region; the sequence is GSSGGGGYGG…GESSSKGPRY (122 aa). Gly residues predominate over residues 485–546; sequence GGGSSGGGGH…GGGYGGGSSS (62 aa). The segment at 485–568 is disordered; that stretch reads GGGSSGGGGH…GESSSKGPRY (84 aa). The segment covering 547-568 has biased composition (low complexity); the sequence is SGGHKSSSSGSVGESSSKGPRY.

It belongs to the intermediate filament family. Heterotetramer of two type I and two type II keratins. Heterodimer with KRT1. Two heterodimers of KRT1 and KRT10 form a heterotetramer. The KRT10 subunit in the heterotetramer is probably disulfide-linked. Expressed in skin.

It is found in the secreted. Its subcellular location is the extracellular space. The protein resides in the cell surface. The protein localises to the cytoplasm. Functionally, plays a role in the establishment of the epidermal barrier on plantar skin. Involved in the maintenance of cell layer development and keratin filament bundles in suprabasal cells of the epithelium. The chain is Keratin, type I cytoskeletal 10 from Canis lupus familiaris (Dog).